The primary structure comprises 398 residues: Dual-specificity RNA methyltransferase RlmN (398 aa).

The active-site Proton acceptor is Glu121. Residues 127-370 (ETDRGTLCVS…VRTPRGRDIL (244 aa)) enclose the Radical SAM core domain. A disulfide bond links Cys134 and Cys373. [4Fe-4S] cluster-binding residues include Cys141, Cys145, and Cys148. S-adenosyl-L-methionine contacts are provided by residues 199–200 (GE), Ser231, 253–255 (SLH), and Asn330. Catalysis depends on Cys373, which acts as the S-methylcysteine intermediate.

This sequence belongs to the radical SAM superfamily. RlmN family. The cofactor is [4Fe-4S] cluster.

The protein localises to the cytoplasm. It carries out the reaction adenosine(2503) in 23S rRNA + 2 reduced [2Fe-2S]-[ferredoxin] + 2 S-adenosyl-L-methionine = 2-methyladenosine(2503) in 23S rRNA + 5'-deoxyadenosine + L-methionine + 2 oxidized [2Fe-2S]-[ferredoxin] + S-adenosyl-L-homocysteine. The catalysed reaction is adenosine(37) in tRNA + 2 reduced [2Fe-2S]-[ferredoxin] + 2 S-adenosyl-L-methionine = 2-methyladenosine(37) in tRNA + 5'-deoxyadenosine + L-methionine + 2 oxidized [2Fe-2S]-[ferredoxin] + S-adenosyl-L-homocysteine. In terms of biological role, specifically methylates position 2 of adenine 2503 in 23S rRNA and position 2 of adenine 37 in tRNAs. m2A2503 modification seems to play a crucial role in the proofreading step occurring at the peptidyl transferase center and thus would serve to optimize ribosomal fidelity. The chain is Dual-specificity RNA methyltransferase RlmN from Rhodopseudomonas palustris (strain BisB5).